We begin with the raw amino-acid sequence, 105 residues long: U-scoloptoxin(10)-Sm3a (105 aa).

Positions 1-23 are cleaved as a signal peptide; sequence MYKFIFIFFTVFFLINIIEESXT.

This sequence belongs to the scoloptoxin-10 family. Post-translationally, contains 3 disulfide bonds. In terms of tissue distribution, expressed by the venom gland.

The protein resides in the secreted. In Scolopendra morsitans (Tanzanian blue ringleg centipede), this protein is U-scoloptoxin(10)-Sm3a.